The primary structure comprises 690 residues: NF-kappa-B-repressing factor (690 aa).

The active repression domain stretch occupies residues 1 to 296 (MEKILHMAEG…FKHIIGEDLV (296 aa)). Positions 25–45 (KPSKGQKRYLSTYDGQNPPKK) match the Nuclear localization signal motif. Disordered stretches follow at residues 27–49 (SKGQKRYLSTYDGQNPPKKQAGS), 65–85 (SSSKAERQEDPYGPQTKDVNG), and 133–160 (YFDSGNPAPSSTSQQANCQPAPEPPPSQ). A Glycyl lysine isopeptide (Lys-Gly) (interchain with G-Cter in SUMO2) cross-link involves residue Lys68. Residues 139–150 (PAPSSTSQQANC) are compositionally biased toward polar residues. A DNA-binding region spans residues 296–388 (VVCQIGMLSY…RVFLQDHCLA (93 aa)). The span at 414–425 (PTYPSVKSSQCH) shows a compositional bias: polar residues. The disordered stretch occupies residues 414–436 (PTYPSVKSSQCHSGSSPKGSGKK). Residue Lys500 forms a Glycyl lysine isopeptide (Lys-Gly) (interchain with G-Cter in SUMO2) linkage. The region spanning 551–596 (EDNIGNQLLRKMGWTGGGLGKSGEGIREPISVKEQHKREGLGLDVE) is the G-patch domain. The region spanning 600-664 (KIAKRDIEQI…DRYLVVGRKR (65 aa)) is the R3H domain. Position 618 is a phosphoserine (Ser618). Residues Lys666 and Lys674 each participate in a glycyl lysine isopeptide (Lys-Gly) (interchain with G-Cter in SUMO2) cross-link.

As to quaternary structure, interacts with NF-kappa-B. Interacts with XRN2. Interacts (via G-patch domain) with DHX15; promoting the RNA helicase activity of DHX15.

It localises to the nucleus. The protein resides in the nucleolus. Functionally, enhances the ATPase activity of DHX15 by acting like a brace that tethers mobile sections of DHX15 together, stabilizing a functional conformation with high RNA affinity of DHX15. Involved in the constitutive silencing of the interferon beta promoter, independently of the virus-induced signals, and in the inhibition of the basal and cytokine-induced iNOS promoter activity. Also involved in the regulation of IL-8 transcription. May also act as a DNA-binding transcription regulator: interacts with a specific negative regulatory element (NRE) 5'-AATTCCTCTGA-3' to mediate transcriptional repression of certain NK-kappa-B responsive genes. The chain is NF-kappa-B-repressing factor (Nkrf) from Mus musculus (Mouse).